A 224-amino-acid polypeptide reads, in one-letter code: tRNA (guanine-N(7)-)-methyltransferase (224 aa).

Residues E54, E79, E106, and D129 each coordinate S-adenosyl-L-methionine. D129 is an active-site residue. 2 residues coordinate substrate: K133 and D165.

Belongs to the class I-like SAM-binding methyltransferase superfamily. TrmB family.

The catalysed reaction is guanosine(46) in tRNA + S-adenosyl-L-methionine = N(7)-methylguanosine(46) in tRNA + S-adenosyl-L-homocysteine. It functions in the pathway tRNA modification; N(7)-methylguanine-tRNA biosynthesis. In terms of biological role, catalyzes the formation of N(7)-methylguanine at position 46 (m7G46) in tRNA. The chain is tRNA (guanine-N(7)-)-methyltransferase from Chlamydia caviae (strain ATCC VR-813 / DSM 19441 / 03DC25 / GPIC) (Chlamydophila caviae).